The sequence spans 147 residues: Interleukin-4 (147 aa).

Positions 1 to 24 are cleaved as a signal peptide; that stretch reads MGLPAQLPVTLLCLLAGTAHFIQG. Cysteine 48 and cysteine 88 are joined by a disulfide. The N-linked (GlcNAc...) asparagine glycan is linked to asparagine 62.

It belongs to the IL-4/IL-13 family.

It is found in the secreted. Functionally, participates in at least several B-cell activation processes as well as of other cell types. It is a costimulator of DNA-synthesis. It induces the expression of class II MHC molecules on resting B-cells. It enhances both secretion and cell surface expression of IgE and IgG1. It also regulates the expression of the low affinity Fc receptor for IgE (CD23) on both lymphocytes and monocytes. Positively regulates IL31RA expression in macrophages. Stimulates autophagy in dendritic cells by interfering with mTORC1 signaling and through the induction of RUFY4. The polypeptide is Interleukin-4 (IL4) (Oryctolagus cuniculus (Rabbit)).